Reading from the N-terminus, the 105-residue chain is MTTLQQQKIRIRLKAFDHRLLDTSCDKIVETAKRTNASPVGPIPLPTRRRIYCVLRSPHVDKDSREHFETRTHRRIVDIYQPSPKTIDALMKLDLPAGVDIEVKL.

The protein belongs to the universal ribosomal protein uS10 family. Part of the 30S ribosomal subunit.

Functionally, involved in the binding of tRNA to the ribosomes. The chain is Small ribosomal subunit protein uS10 from Acaryochloris marina (strain MBIC 11017).